Reading from the N-terminus, the 370-residue chain is Homospermidine synthase 2 (370 aa).

The protein belongs to the deoxyhypusine synthase family. As to quaternary structure, homotetramer. NAD(+) serves as cofactor. In terms of processing, the N-terminus is blocked. Expressed in roots.

It catalyses the reaction putrescine + spermidine = sym-homospermidine + propane-1,3-diamine. It participates in alkaloid biosynthesis; pyrrolizidine alkaloid biosynthesis. Its function is as follows. Catalyzes the transfer of an aminobutyl unit from spermidine onto putrescine. The resulting polyamine homospermidine is a precursor in the biosynthesis of pyrrolizidine alkaloids. The polypeptide is Homospermidine synthase 2 (Senecio vernalis (Spring groundsel)).